The primary structure comprises 501 residues: Aspartate--tRNA ligase, cytoplasmic (501 aa).

Phosphothreonine is present on Thr52. At Lys74 the chain carries N6-acetyllysine. Glu229 is an L-aspartate binding site. At Ser249 the chain carries Phosphoserine. The interval 251 to 254 (QLYK) is aspartate. Arg273 lines the L-aspartate pocket. ATP contacts are provided by residues 273–275 (RAE) and 281–283 (RHL). Lys374 is subject to N6-acetyllysine. Residues 411-415 (KQSNS) form a binding site for the 3'-end of tRNA region. An ATP-binding site is contributed by Glu424. Residues Ser427 and Arg431 each contribute to the L-aspartate site. Residue 472-475 (GLER) coordinates ATP. Thr500 bears the Phosphothreonine; by PKA mark.

The protein belongs to the class-II aminoacyl-tRNA synthetase family. Type 2 subfamily. Homodimer. Part of a multisubunit complex that groups tRNA ligases for Arg (RARS1), Asp (DARS1), Gln (QARS1), Ile (IARS1), Leu (LARS1), Lys (KARS1), Met (MARS1) the bifunctional ligase for Glu and Pro (EPRS1) and the auxiliary subunits AIMP1/p43, AIMP2/p38 and EEF1E1/p18.

Its subcellular location is the cytoplasm. It catalyses the reaction tRNA(Asp) + L-aspartate + ATP = L-aspartyl-tRNA(Asp) + AMP + diphosphate. Functionally, catalyzes the specific attachment of an amino acid to its cognate tRNA in a 2 step reaction: the amino acid (AA) is first activated by ATP to form AA-AMP and then transferred to the acceptor end of the tRNA. The protein is Aspartate--tRNA ligase, cytoplasmic (DARS1) of Pongo abelii (Sumatran orangutan).